The primary structure comprises 427 residues: Glucose-1-phosphate adenylyltransferase (427 aa).

Residues Y112, G177, 192–193, and S210 each bind alpha-D-glucose 1-phosphate; that span reads EK.

It belongs to the bacterial/plant glucose-1-phosphate adenylyltransferase family. Homotetramer.

The catalysed reaction is alpha-D-glucose 1-phosphate + ATP + H(+) = ADP-alpha-D-glucose + diphosphate. It functions in the pathway glycan biosynthesis; glycogen biosynthesis. Involved in the biosynthesis of ADP-glucose, a building block required for the elongation reactions to produce glycogen. Catalyzes the reaction between ATP and alpha-D-glucose 1-phosphate (G1P) to produce pyrophosphate and ADP-Glc. The protein is Glucose-1-phosphate adenylyltransferase of Methylobacillus flagellatus (strain ATCC 51484 / DSM 6875 / VKM B-1610 / KT).